A 634-amino-acid chain; its full sequence is DNA-directed RNA polymerase subunit gamma (634 aa).

4 residues coordinate Zn(2+): Cys74, Cys76, Cys89, and Cys92. Mg(2+)-binding residues include Asp471, Asp473, and Asp475.

Belongs to the RNA polymerase beta' chain family. RpoC1 subfamily. As to quaternary structure, in cyanobacteria the RNAP catalytic core is composed of 2 alpha, 1 beta, 1 beta', 1 gamma and 1 omega subunit. When a sigma factor is associated with the core the holoenzyme is formed, which can initiate transcription. Requires Mg(2+) as cofactor. Zn(2+) is required as a cofactor.

The enzyme catalyses RNA(n) + a ribonucleoside 5'-triphosphate = RNA(n+1) + diphosphate. In terms of biological role, DNA-dependent RNA polymerase catalyzes the transcription of DNA into RNA using the four ribonucleoside triphosphates as substrates. This is DNA-directed RNA polymerase subunit gamma from Prochlorococcus marinus (strain MIT 9313).